The sequence spans 165 residues: Ribosome maturation factor RimM (165 aa).

In terms of domain architecture, PRC barrel spans glutamate 90 to tryptophan 161.

It belongs to the RimM family. In terms of assembly, binds ribosomal protein uS19.

It is found in the cytoplasm. An accessory protein needed during the final step in the assembly of 30S ribosomal subunit, possibly for assembly of the head region. Essential for efficient processing of 16S rRNA. May be needed both before and after RbfA during the maturation of 16S rRNA. It has affinity for free ribosomal 30S subunits but not for 70S ribosomes. The chain is Ribosome maturation factor RimM from Clostridium perfringens (strain SM101 / Type A).